The sequence spans 268 residues: Tryptophan synthase alpha chain (268 aa).

Residues E49 and D60 each act as proton acceptor in the active site.

This sequence belongs to the TrpA family. As to quaternary structure, tetramer of two alpha and two beta chains.

The catalysed reaction is (1S,2R)-1-C-(indol-3-yl)glycerol 3-phosphate + L-serine = D-glyceraldehyde 3-phosphate + L-tryptophan + H2O. The protein operates within amino-acid biosynthesis; L-tryptophan biosynthesis; L-tryptophan from chorismate: step 5/5. Functionally, the alpha subunit is responsible for the aldol cleavage of indoleglycerol phosphate to indole and glyceraldehyde 3-phosphate. In Citrobacter koseri (strain ATCC BAA-895 / CDC 4225-83 / SGSC4696), this protein is Tryptophan synthase alpha chain.